Here is a 318-residue protein sequence, read N- to C-terminus: Myeloid-associated differentiation marker (318 aa).

2 consecutive MARVEL domains span residues A25–G157 and Y162–F315. 8 helical membrane passes run L35–T55, M58–I78, F95–P115, A131–W151, T165–I185, L197–L217, F233–P253, and L290–S310.

It belongs to the MAL family.

The protein resides in the membrane. This is Myeloid-associated differentiation marker (Myadm) from Rattus norvegicus (Rat).